A 230-amino-acid polypeptide reads, in one-letter code: MVVEDSQKSTITDEQNPSRVDNDDDDLEDGEILEDADDAASAASKPPSAFLRNPHPLENSWTFWFDNPSAKSKQAAWGSSIRPIYTFSTVEEFWSIYNNIHHPSKLGVGADFHCFKHKIEPKWEDPICANGGKWTMTFQRGKSDTSWLYTLLAMIGEQFDYGDEICGAVVNVRNRQDKISIWTKNASNEAAQMSIGKQWKEFLDYNEPIGFIFHEDAKKHERSAKNKYAI.

Residues Met-1–Asn-53 form a disordered region. The span at Lys-8–Arg-19 shows a compositional bias: polar residues. The span at Asn-22 to Asp-38 shows a compositional bias: acidic residues. Low complexity predominate over residues Ala-39–Ala-49. EIF4G-binding stretches follow at residues His-55 to Glu-58 and Phe-65 to His-101. MRNA contacts are provided by residues Lys-73–Gly-78, Lys-105, and Trp-123–Glu-124. Cys-128 and Cys-166 are joined by a disulfide. Residues Tyr-149 to Gln-158 form an EIF4G-binding region. Residues Arg-173–Lys-178 and Lys-218–Arg-222 contribute to the mRNA site.

The protein belongs to the eukaryotic initiation factor 4E family. EIF4F is a multi-subunit complex, the composition of which varies with external and internal environmental conditions. It is composed of at least EIF4A, EIF4E and EIF4G. EIF4E is also known to interact with other partners. In higher plants two isoforms of EIF4F have been identified, named isoform EIF4F and isoform EIF(iso)4F. Isoform EIF4F has subunits p220 and p26, whereas isoform EIF(iso)4F has subunits p82 and p28. In terms of assembly, (Microbial infection) Interacts with potyvirus viral genome-linked protein (VPg); this interaction is possible in susceptible hosts but impaired in resistant plants. According to the redox status, the Cys-128-Cys-166 disulfide bridge may have a role in regulating protein function by affecting its ability to bind capped mRNA.

It is found in the nucleus. It localises to the cytoplasm. Component of the protein complex eIF4F, which is involved in the recognition of the mRNA cap, ATP-dependent unwinding of 5'-terminal secondary structure and recruitment of mRNA to the ribosome. Recognizes and binds the 7-methylguanosine-containing mRNA cap during an early step in the initiation of protein synthesis and facilitates ribosome binding by inducing the unwinding of the mRNAs secondary structures. Key component of recessive resistance to potyviruses. In terms of biological role, (Microbial infection) Susceptibility host factor required for viral infection by recruiting viral RNAs to the host ribosomal complex via an interaction with viral genome-linked protein (VPg). This Phaseolus vulgaris (Kidney bean) protein is Eukaryotic translation initiation factor 4E-1.